A 434-amino-acid chain; its full sequence is Elongation factor 1-alpha (434 aa).

The tr-type G domain maps to 5–232; it reads KPHINLVVIG…DNVHPPKRPV (228 aa). The tract at residues 14 to 21 is G1; the sequence is GHVVAGKS. Residue 14-21 participates in GTP binding; that stretch reads GHVVAGKS. Residues 70–74 are G2; that stretch reads GITID. The tract at residues 91-94 is G3; sequence DAPG. Residues 91–95 and 153–156 contribute to the GTP site; these read DAPGH and NKMD. Positions 153 to 156 are G4; that stretch reads NKMD. Residues 196 to 198 form a G5 region; that stretch reads SGF.

Belongs to the TRAFAC class translation factor GTPase superfamily. Classic translation factor GTPase family. EF-Tu/EF-1A subfamily.

The protein localises to the cytoplasm. This protein promotes the GTP-dependent binding of aminoacyl-tRNA to the A-site of ribosomes during protein biosynthesis. The protein is Elongation factor 1-alpha of Blastocystis hominis.